The sequence spans 944 residues: Isoleucine--tRNA ligase (944 aa).

A 'HIGH' region motif is present at residues 58–68; sequence PYANGSIHIGH. An L-isoleucyl-5'-AMP-binding site is contributed by E563. The short motif at 604–608 is the 'KMSKS' region element; that stretch reads KMSKS. K607 contacts ATP. Positions 907, 910, 927, and 930 each coordinate Zn(2+).

This sequence belongs to the class-I aminoacyl-tRNA synthetase family. IleS type 1 subfamily. Monomer. Zn(2+) is required as a cofactor.

The protein localises to the cytoplasm. The enzyme catalyses tRNA(Ile) + L-isoleucine + ATP = L-isoleucyl-tRNA(Ile) + AMP + diphosphate. Functionally, catalyzes the attachment of isoleucine to tRNA(Ile). As IleRS can inadvertently accommodate and process structurally similar amino acids such as valine, to avoid such errors it has two additional distinct tRNA(Ile)-dependent editing activities. One activity is designated as 'pretransfer' editing and involves the hydrolysis of activated Val-AMP. The other activity is designated 'posttransfer' editing and involves deacylation of mischarged Val-tRNA(Ile). The chain is Isoleucine--tRNA ligase from Salmonella typhi.